The sequence spans 65 residues: Protein translocase subunit SecE (65 aa).

The helical transmembrane segment at 44–64 (LVMAVVGLIAYIVQLTTSLII) threads the bilayer.

This sequence belongs to the SecE/SEC61-gamma family. In terms of assembly, component of the Sec protein translocase complex. Heterotrimer consisting of SecY (alpha), SecG (beta) and SecE (gamma) subunits. The heterotrimers can form oligomers, although 1 heterotrimer is thought to be able to translocate proteins. Interacts with the ribosome. May interact with SecDF, and other proteins may be involved.

Its subcellular location is the cell membrane. In terms of biological role, essential subunit of the Sec protein translocation channel SecYEG. Clamps together the 2 halves of SecY. May contact the channel plug during translocation. The chain is Protein translocase subunit SecE from Sulfolobus acidocaldarius (strain ATCC 33909 / DSM 639 / JCM 8929 / NBRC 15157 / NCIMB 11770).